The chain runs to 320 residues: Very-long-chain 3-oxoacyl-CoA reductase (320 aa).

Residues 17-37 traverse the membrane as a helical segment; sequence FWYLGVVAAVWWGLRAAWCLL. 56-85 lines the NADP(+) pocket; that stretch reads GKWAVVTGATDGIGKAYAEELAKRGMNIVL. Helical transmembrane passes span 189–209 and 283–303; these read GVIL…LTVY and AIMG…SLGM. Ser196 lines the substrate pocket. Tyr209 serves as the catalytic Proton acceptor.

Belongs to the short-chain dehydrogenases/reductases (SDR) family. 17-beta-HSD 3 subfamily.

Its subcellular location is the endoplasmic reticulum membrane. The enzyme catalyses a very-long-chain (3R)-3-hydroxyacyl-CoA + NADP(+) = a very-long-chain 3-oxoacyl-CoA + NADPH + H(+). It carries out the reaction 17beta-estradiol + NAD(+) = estrone + NADH + H(+). It catalyses the reaction 17beta-estradiol + NADP(+) = estrone + NADPH + H(+). The catalysed reaction is 3-oxooctadecanoyl-CoA + NADPH + H(+) = (3R)-hydroxyoctadecanoyl-CoA + NADP(+). The enzyme catalyses (7Z,10Z,13Z,16Z)-3-oxodocosatetraenoyl-CoA + NADPH + H(+) = (3R)-hydroxy-(7Z,10Z,13Z,16Z)-docosatetraenoyl-CoA + NADP(+). It carries out the reaction 3-oxo-(7Z,10Z,13Z,16Z,19Z)-docosapentaenoyl-CoA + NADPH + H(+) = (3R)-hydroxy-(7Z,10Z,13Z,16Z,19Z)-docosapentaenoyl-CoA + NADP(+). It catalyses the reaction (8Z,11Z,14Z)-3-oxoeicosatrienoyl-CoA + NADPH + H(+) = (3R)-hydroxy-(8Z,11Z,14Z)-eicosatrienoyl-CoA + NADP(+). It functions in the pathway lipid metabolism; fatty acid biosynthesis. The protein operates within steroid biosynthesis; estrogen biosynthesis. Catalyzes the second of the four reactions of the long-chain fatty acids elongation cycle. This endoplasmic reticulum-bound enzymatic process, allows the addition of two carbons to the chain of long- and very long-chain fatty acids/VLCFAs per cycle. This enzyme has a 3-ketoacyl-CoA reductase activity, reducing 3-ketoacyl-CoA to 3-hydroxyacyl-CoA, within each cycle of fatty acid elongation. Thereby, it may participate in the production of VLCFAs of different chain lengths that are involved in multiple biological processes as precursors of membrane lipids and lipid mediators. May also catalyze the transformation of estrone (E1) into estradiol (E2) and play a role in estrogen formation. The polypeptide is Very-long-chain 3-oxoacyl-CoA reductase (hsd17b12) (Xenopus tropicalis (Western clawed frog)).